We begin with the raw amino-acid sequence, 292 residues long: uncharacterized protein (292 aa).

A helical transmembrane segment spans residues 17–37 (SMDMFFFLFIFLLFIYPEMMM).

This sequence to M.jannaschii MJ0137.

Its subcellular location is the membrane. This is an uncharacterized protein from Methanocaldococcus jannaschii (strain ATCC 43067 / DSM 2661 / JAL-1 / JCM 10045 / NBRC 100440) (Methanococcus jannaschii).